The primary structure comprises 310 residues: Methionyl-tRNA formyltransferase (310 aa).

Ser110 to Pro113 contacts (6S)-5,6,7,8-tetrahydrofolate.

It belongs to the Fmt family.

It catalyses the reaction L-methionyl-tRNA(fMet) + (6R)-10-formyltetrahydrofolate = N-formyl-L-methionyl-tRNA(fMet) + (6S)-5,6,7,8-tetrahydrofolate + H(+). Functionally, attaches a formyl group to the free amino group of methionyl-tRNA(fMet). The formyl group appears to play a dual role in the initiator identity of N-formylmethionyl-tRNA by promoting its recognition by IF2 and preventing the misappropriation of this tRNA by the elongation apparatus. This Clostridium acetobutylicum (strain ATCC 824 / DSM 792 / JCM 1419 / IAM 19013 / LMG 5710 / NBRC 13948 / NRRL B-527 / VKM B-1787 / 2291 / W) protein is Methionyl-tRNA formyltransferase.